A 566-amino-acid chain; its full sequence is Proline--tRNA ligase (566 aa).

This sequence belongs to the class-II aminoacyl-tRNA synthetase family. ProS type 1 subfamily. As to quaternary structure, homodimer.

Its subcellular location is the cytoplasm. The enzyme catalyses tRNA(Pro) + L-proline + ATP = L-prolyl-tRNA(Pro) + AMP + diphosphate. Catalyzes the attachment of proline to tRNA(Pro) in a two-step reaction: proline is first activated by ATP to form Pro-AMP and then transferred to the acceptor end of tRNA(Pro). As ProRS can inadvertently accommodate and process non-cognate amino acids such as alanine and cysteine, to avoid such errors it has two additional distinct editing activities against alanine. One activity is designated as 'pretransfer' editing and involves the tRNA(Pro)-independent hydrolysis of activated Ala-AMP. The other activity is designated 'posttransfer' editing and involves deacylation of mischarged Ala-tRNA(Pro). The misacylated Cys-tRNA(Pro) is not edited by ProRS. The protein is Proline--tRNA ligase of Staphylococcus haemolyticus (strain JCSC1435).